The following is a 636-amino-acid chain: 1-deoxy-D-xylulose-5-phosphate synthase (636 aa).

Residues histidine 72 and 113 to 115 (GHA) each bind thiamine diphosphate. A Mg(2+)-binding site is contributed by aspartate 144. Thiamine diphosphate is bound by residues 145-146 (GA), asparagine 174, tyrosine 287, and glutamate 370. Asparagine 174 serves as a coordination point for Mg(2+).

The protein belongs to the transketolase family. DXPS subfamily. Homodimer. The cofactor is Mg(2+). Requires thiamine diphosphate as cofactor.

The enzyme catalyses D-glyceraldehyde 3-phosphate + pyruvate + H(+) = 1-deoxy-D-xylulose 5-phosphate + CO2. The protein operates within metabolic intermediate biosynthesis; 1-deoxy-D-xylulose 5-phosphate biosynthesis; 1-deoxy-D-xylulose 5-phosphate from D-glyceraldehyde 3-phosphate and pyruvate: step 1/1. Its function is as follows. Catalyzes the acyloin condensation reaction between C atoms 2 and 3 of pyruvate and glyceraldehyde 3-phosphate to yield 1-deoxy-D-xylulose-5-phosphate (DXP). The sequence is that of 1-deoxy-D-xylulose-5-phosphate synthase from Crocosphaera subtropica (strain ATCC 51142 / BH68) (Cyanothece sp. (strain ATCC 51142)).